Reading from the N-terminus, the 289-residue chain is Ribosomal RNA small subunit methyltransferase A (289 aa).

6 residues coordinate S-adenosyl-L-methionine: N28, L30, G55, E76, D101, and N125.

It belongs to the class I-like SAM-binding methyltransferase superfamily. rRNA adenine N(6)-methyltransferase family. RsmA subfamily.

Its subcellular location is the cytoplasm. It carries out the reaction adenosine(1518)/adenosine(1519) in 16S rRNA + 4 S-adenosyl-L-methionine = N(6)-dimethyladenosine(1518)/N(6)-dimethyladenosine(1519) in 16S rRNA + 4 S-adenosyl-L-homocysteine + 4 H(+). In terms of biological role, specifically dimethylates two adjacent adenosines (A1518 and A1519) in the loop of a conserved hairpin near the 3'-end of 16S rRNA in the 30S particle. May play a critical role in biogenesis of 30S subunits. In Clostridioides difficile (strain 630) (Peptoclostridium difficile), this protein is Ribosomal RNA small subunit methyltransferase A.